Consider the following 378-residue polypeptide: Chaperone protein DnaJ (378 aa).

Residues 5–70 (DYYESLGVAK…QKRAAYDQYG (66 aa)) form the J domain. The CR-type zinc-finger motif lies at 133–211 (GVTKEIRIPA…CHGHGRVEKS (79 aa)). Positions 146, 149, 163, 166, 185, 188, 199, and 202 each coordinate Zn(2+). CXXCXGXG motif repeat units lie at residues 146–153 (CDVCHGNG), 163–170 (CPTCHGNG), 185–192 (CPHCHGRG), and 199–206 (CVKCHGHG).

Belongs to the DnaJ family. As to quaternary structure, homodimer. The cofactor is Zn(2+).

The protein localises to the cytoplasm. Functionally, participates actively in the response to hyperosmotic and heat shock by preventing the aggregation of stress-denatured proteins and by disaggregating proteins, also in an autonomous, DnaK-independent fashion. Unfolded proteins bind initially to DnaJ; upon interaction with the DnaJ-bound protein, DnaK hydrolyzes its bound ATP, resulting in the formation of a stable complex. GrpE releases ADP from DnaK; ATP binding to DnaK triggers the release of the substrate protein, thus completing the reaction cycle. Several rounds of ATP-dependent interactions between DnaJ, DnaK and GrpE are required for fully efficient folding. Also involved, together with DnaK and GrpE, in the DNA replication of plasmids through activation of initiation proteins. The sequence is that of Chaperone protein DnaJ from Pectobacterium carotovorum subsp. carotovorum (strain PC1).